The primary structure comprises 336 residues: F420-dependent glucose-6-phosphate dehydrogenase (336 aa).

Asp37 provides a ligand contact to coenzyme F420-(gamma-Glu)n. His38 functions as the Proton donor in the catalytic mechanism. Residues Thr74 and 105 to 106 (SG) each bind coenzyme F420-(gamma-Glu)n. Residue Glu107 is the Proton acceptor of the active site. Coenzyme F420-(gamma-Glu)n is bound by residues Asn110, 173-174 (SG), and 176-177 (SA). Residues Thr191, Lys194, Lys255, and Arg279 each contribute to the substrate site.

This sequence belongs to the F420-dependent glucose-6-phosphate dehydrogenase family. As to quaternary structure, homodimer.

It carries out the reaction oxidized coenzyme F420-(gamma-L-Glu)(n) + D-glucose 6-phosphate + H(+) = 6-phospho-D-glucono-1,5-lactone + reduced coenzyme F420-(gamma-L-Glu)(n). In terms of biological role, catalyzes the coenzyme F420-dependent oxidation of glucose 6-phosphate (G6P) to 6-phosphogluconolactone. The sequence is that of F420-dependent glucose-6-phosphate dehydrogenase from Beutenbergia cavernae (strain ATCC BAA-8 / DSM 12333 / CCUG 43141 / JCM 11478 / NBRC 16432 / NCIMB 13614 / HKI 0122).